Here is a 247-residue protein sequence, read N- to C-terminus: Probable transcriptional regulatory protein PBPRA1113 (247 aa).

The protein belongs to the TACO1 family.

The protein localises to the cytoplasm. The polypeptide is Probable transcriptional regulatory protein PBPRA1113 (Photobacterium profundum (strain SS9)).